Here is a 66-residue protein sequence, read N- to C-terminus: Muscarinic toxin 4 (66 aa).

Intrachain disulfides connect C3–C24, C17–C42, C46–C58, and C59–C64.

Belongs to the three-finger toxin family. Short-chain subfamily. Aminergic toxin sub-subfamily. Monomer. In terms of tissue distribution, expressed by the venom gland.

The protein localises to the secreted. In terms of biological role, binds to the muscarinic acetylcholine receptor (CHRM). The chain is Muscarinic toxin 4 from Dendroaspis angusticeps (Eastern green mamba).